The chain runs to 316 residues: SHC-transforming protein homolog 1 (316 aa).

A PID domain is found at 16–158 (GVSLSATYLG…LIDVLTTAIN (143 aa)). In terms of domain architecture, SH2 spans 211–307 (WYHGNLSRED…ETSLNLIRPV (97 aa)). Residues 292–316 (SEGRDRETSLNLIRPVPCPGSDDIE) are disordered.

In terms of assembly, interacts (via PID domain) with daf-2 (via cytoplasmic domain). Interacts with mek-1; the interaction is independent of mek-1 catalytic activity and is constitutive. Interacts (via N-terminus) with mlk-1 (via NPQY motif when phosphorylated on tyrosine residue). Does not interact with jkk-1 or sek-1. Interacts (via SH2 domain) with svh-2. Interacts with svh-4. Expressed in hypodermis, intestine, head and tail neurons, pharynx, gonads, vulva and body muscles.

It localises to the cytoplasm. The protein resides in the nucleus. It is found in the cell membrane. Scaffold protein which plays an important role in the activation of the JNK pathway composed of mlk-1, mek-1 and kgb-1; by bringing together mek-1 and mlk-1, promotes mlk-1-mediated phosphorylation and activation of mek-1 which in turn phosphorylates kgb-1. In addition, negatively modulates the activation of the insulin/IGF-1-like signaling (IIS) probably by inhibiting the insulin receptor daf-2. Positively regulates the activity of the transcription factor daf-16/FOXO by both inhibiting IIS and activating the JNK pathway. Plays a role in maintaining gonadal basement membrane integrity through activation of the JNK pathway components mek-1 and jnk-1. Involved in the response to several environmental stresses including heavy metal ions (Cu(2+) and Cd(2+)), heat, oxidative and protein misfolding (ER) stresses. Plays a role in gonad and germline development following the L1 diapause. Plays a role in life span and egg laying. Plays a role in axon regeneration after injury. In Caenorhabditis elegans, this protein is SHC-transforming protein homolog 1.